The primary structure comprises 528 residues: Tyrosine--tRNA ligase, cytoplasmic (528 aa).

Met-1 carries the N-acetylmethionine modification. Gly-2 bears the N-acetylglycine; in Tyrosine--tRNA ligase, cytoplasmic, N-terminally processed mark. Position 39 (Tyr-39) interacts with L-tyrosine. Tyr-39 contributes to the trans-resveratrol binding site. The 'HIGH' region signature appears at 44-52; that stretch reads TTGKPHVAY. 4 residues coordinate L-tyrosine: Tyr-166, Gln-170, Asp-173, and Gln-188. Trans-resveratrol contacts are provided by Gln-170 and Asp-173. An N6-acetyllysine modification is found at Lys-197. Ser-205 bears the Phosphoserine mark. Lys-206 carries the N6-acetyllysine modification. A 'KMSKS' region motif is present at residues 222–226; it reads KMSSS. Positions 242-247 match the Nuclear localization signal motif; it reads KKKLKK. Residues 339–363 are disordered; sequence AAYPDPSKQKPMAKGPAKNSEPEEV. The region spanning 364-468 is the tRNA-binding domain; sequence IPSRLDIRVG…AGSAPGERVF (105 aa). A Phosphoserine modification is found at Ser-386. N6-acetyllysine is present on residues Lys-474, Lys-482, and Lys-490.

Belongs to the class-I aminoacyl-tRNA synthetase family. Homodimer. Interacts (when binding to resveratrol) with PARP1; interaction stimulates the poly-ADP-ribosyltransferase activity of PARP1.

The protein localises to the cytoplasm. The protein resides in the nucleus. It catalyses the reaction tRNA(Tyr) + L-tyrosine + ATP = L-tyrosyl-tRNA(Tyr) + AMP + diphosphate + H(+). Its activity is regulated as follows. Resveratrol strongly inhibits the tyrosine--tRNA ligase activity. Functionally, tyrosine--tRNA ligase that catalyzes the attachment of tyrosine to tRNA(Tyr) in a two-step reaction: tyrosine is first activated by ATP to form Tyr-AMP and then transferred to the acceptor end of tRNA(Tyr). Also acts as a positive regulator of poly-ADP-ribosylation in the nucleus, independently of its tyrosine--tRNA ligase activity. Activity is switched upon resveratrol-binding: resveratrol strongly inhibits the tyrosine--tRNA ligase activity and promotes relocalization to the nucleus, where YARS1 specifically stimulates the poly-ADP-ribosyltransferase activity of PARP1. The sequence is that of Tyrosine--tRNA ligase, cytoplasmic (YARS1) from Pongo abelii (Sumatran orangutan).